The primary structure comprises 92 residues: Small ribosomal subunit protein uS19 (92 aa).

It belongs to the universal ribosomal protein uS19 family.

Functionally, protein S19 forms a complex with S13 that binds strongly to the 16S ribosomal RNA. The sequence is that of Small ribosomal subunit protein uS19 from Albidiferax ferrireducens (strain ATCC BAA-621 / DSM 15236 / T118) (Rhodoferax ferrireducens).